The sequence spans 1849 residues: Brefeldin A-inhibited guanine nucleotide-exchange protein 1 (1849 aa).

Residues 2–224 (YEGKKTKNMF…QEAKQMEKER (223 aa)) are DCB; DCB:DCB domain and DCB:HUS domain interaction. Residues 46–58 (AETEKQSPPHGEA) are compositionally biased toward basic and acidic residues. Disordered regions lie at residues 46–65 (AETE…SSTL), 216–248 (EAKQ…QLRY), 267–302 (LHTN…DQAT), and 378–413 (TPIS…SPGA). Position 52 is a phosphoserine (S52). Basic and acidic residues predominate over residues 267–277 (LHTNDVDKSLQ). Phosphoserine occurs at positions 286, 289, 290, 397, and 410. Residues 394–409 (SVSSNDTQESGNSSGP) are compositionally biased toward polar residues. The HUS; DCB:HUS domain interaction stretch occupies residues 557–577 (ADAQSVVDIYVNYDCDLNAAN). Residues 709-840 (FNKKPKRGIQ…IIMLTTDLHS (132 aa)) form the SEC7 domain. Residues 711-715 (KKPKR) carry the Nuclear localization signal (NLS) motif. S1079 carries the phosphoserine modification. A disordered region spans residues 1543-1562 (RPNSGETAPPPPSPVSEKPL). A phosphoserine mark is found at S1566 and S1569.

Homodimer. Interacts with ARFGEF2/BIG2; both proteins are probably part of the same or very similar macromolecular complexes. Interacts with FKBP2. Interacts with MYO9B. Interacts with PRKAR1A and PRKAR2A. Interacts with PPP1CC. Interacts with NCL, FBL, NUP62 and U3 small nucleolar RNA. Interacts with DPY30. Interacts with PDE3A. Interacts with KANK1. Interacts with TBC1D22A and TBC1D22B. Interacts (via N-terminus) with ARL1. Post-translationally, phosphorylated. In vitro phosphorylated by PKA reducing its GEF activity and dephosphorylated by phosphatase PP1. As to expression, expressed in placenta, lung, heart, brain, kidney and pancreas.

The protein resides in the cytoplasm. Its subcellular location is the perinuclear region. It localises to the golgi apparatus. The protein localises to the trans-Golgi network membrane. It is found in the nucleus. The protein resides in the nucleolus. Its subcellular location is the nucleus matrix. With respect to regulation, inhibited by brefeldin A. Its function is as follows. Promotes guanine-nucleotide exchange on ARF1 and ARF3. Promotes the activation of ARF1/ARF3 through replacement of GDP with GTP. Involved in vesicular trafficking. Required for the maintenance of Golgi structure; the function may be independent of its GEF activity. Required for the maturation of integrin beta-1 in the Golgi. Involved in the establishment and persistence of cell polarity during directed cell movement in wound healing. Proposed to act as A kinase-anchoring protein (AKAP) and may mediate crosstalk between Arf and PKA pathways. Inhibits GAP activity of MYO9B probably through competitive RhoA binding. The function in the nucleus remains to be determined. The chain is Brefeldin A-inhibited guanine nucleotide-exchange protein 1 (ARFGEF1) from Homo sapiens (Human).